Reading from the N-terminus, the 318-residue chain is 2-keto-3-deoxygluconate permease (318 aa).

A run of 10 helical transmembrane segments spans residues 10–30, 42–62, 76–96, 105–125, 139–159, 162–182, 199–219, 224–244, 263–283, and 289–309; these read IPGGLMLVPLFLGALCNTFTP, GLITGTIPILAVWFFCMGASI, VLVITKLATAWVVALIAGTFL, LLAGISVLALVAAMDMTNGGL, AGAFVLMSLESGPLMTMVILG, GIATFEPQLFVGAVLPFLIGF, VQTLIPFFAFALGNTINLAVI, FAGIFLGVLVIVVTGIPLIIA, AGAAVATPLLIANMAPEFAPV, and ALVATSVIVTSVLVPVITALW.

The protein belongs to the KdgT transporter family.

It localises to the cell inner membrane. The enzyme catalyses 2-dehydro-3-deoxy-D-gluconate(in) + H(+)(in) = 2-dehydro-3-deoxy-D-gluconate(out) + H(+)(out). Functionally, catalyzes the proton-dependent uptake of 2-keto-3-deoxygluconate (KDG) into the cell. This chain is 2-keto-3-deoxygluconate permease, found in Pectobacterium carotovorum subsp. carotovorum (strain PC1).